Consider the following 352-residue polypeptide: Selenide, water dikinase (352 aa).

Cys21 is an active-site residue. ATP contacts are provided by residues Lys24 and 51–53; that span reads TND. Asp54 lines the Mg(2+) pocket. ATP-binding positions include Asp71, Asp94, and 141-143; that span reads GHS. A Mg(2+)-binding site is contributed by Asp94. Mg(2+) is bound at residue Asp231.

The protein belongs to the selenophosphate synthase 1 family. Class I subfamily. In terms of assembly, homodimer. It depends on Mg(2+) as a cofactor.

It carries out the reaction hydrogenselenide + ATP + H2O = selenophosphate + AMP + phosphate + 2 H(+). Functionally, synthesizes selenophosphate from selenide and ATP. The polypeptide is Selenide, water dikinase (Myxococcus xanthus (strain DK1622)).